The primary structure comprises 111 residues: Cell division topological specificity factor (111 aa).

This sequence belongs to the MinE family.

Functionally, prevents the cell division inhibition by proteins MinC and MinD at internal division sites while permitting inhibition at polar sites. This ensures cell division at the proper site by restricting the formation of a division septum at the midpoint of the long axis of the cell. The chain is Cell division topological specificity factor from Prochlorococcus marinus (strain MIT 9312).